A 59-amino-acid polypeptide reads, in one-letter code: Large ribosomal subunit protein bL32 (59 aa).

A compositionally biased stretch (basic residues) spans 1 to 16 (MAVPKRKTSPSKRGMR). A disordered region spans residues 1 to 41 (MAVPKRKTSPSKRGMRRSADALKAPTYIEDKNSGELRRPHH). The span at 28 to 41 (IEDKNSGELRRPHH) shows a compositional bias: basic and acidic residues.

This sequence belongs to the bacterial ribosomal protein bL32 family.

The protein is Large ribosomal subunit protein bL32 of Bartonella henselae (strain ATCC 49882 / DSM 28221 / CCUG 30454 / Houston 1) (Rochalimaea henselae).